A 246-amino-acid polypeptide reads, in one-letter code: Tyrosine recombinase XerD-like (246 aa).

Residues 1–72 (MINDINNFIE…AVNQFLFFLY (72 aa)) enclose the Core-binding (CB) domain. Residues 84–246 (QETEKITLAQ…TPITLERYYR (163 aa)) form the Tyr recombinase domain. Residues K149 and R212 contribute to the active site. Y244 (O-(3'-phospho-DNA)-tyrosine intermediate) is an active-site residue.

It belongs to the 'phage' integrase family. XerD-like subfamily.

It localises to the cytoplasm. In terms of biological role, putative tyrosine recombinase. Not involved in the cutting and rejoining of the recombining DNA molecules on dif(SL) site. The sequence is that of Tyrosine recombinase XerD-like from Streptococcus agalactiae serotype V (strain ATCC BAA-611 / 2603 V/R).